The chain runs to 161 residues: Anaerobic nitrite reductase Glb1-2 (161 aa).

The 150-residue stretch at 9–158 (AFTEEQEALV…LASAIIAEMK (150 aa)) folds into the Globin domain. A Homodimerization motif is present at residues 42-46 (EIAPP). Heme b is bound by residues Ser52, Lys66, His70, Lys100, Thr104, and His105. A Homodimerization motif is present at residues 112–124 (PEHFEVTKQALLD).

The protein belongs to the plant globin family. In terms of assembly, homodimer. Heme b serves as cofactor. In terms of tissue distribution, mainly expressed in root nodules and leaves, and, to a lower extent, in roots, stems, flowers and fruits. Accumulates in mature root nodules.

The enzyme catalyses Fe(III)-heme b-[protein] + nitric oxide + H2O = Fe(II)-heme b-[protein] + nitrite + 2 H(+). Its function is as follows. Phytoglobin that reduces nitrite to nitric oxide (NO) under anoxic conditions (e.g. during flooding or in waterlogged soil) and upon root nodulation. Required for general plant development and during nodulation, especially for the onset of symbiosis. Monitors nitric oxide (NO) levels during early phase of the nitrogen-fixing symbiosis and buffers oxygen in functioning nodules. Necessary for the production of pods. May not function as an oxygen storage or transport protein. Has an unusually high affinity for O(2) through a hexacoordinate heme iron because of a very low dissociation constant. The sequence is that of Anaerobic nitrite reductase Glb1-2 from Lotus japonicus (Lotus corniculatus var. japonicus).